The following is a 341-amino-acid chain: tRNA N6-adenosine threonylcarbamoyltransferase (341 aa).

2 residues coordinate Fe cation: histidine 111 and histidine 115. Residues 134–138 (LVSGG), aspartate 167, glycine 180, and asparagine 276 each bind substrate. Position 304 (aspartate 304) interacts with Fe cation.

This sequence belongs to the KAE1 / TsaD family. Requires Fe(2+) as cofactor.

The protein localises to the cytoplasm. The catalysed reaction is L-threonylcarbamoyladenylate + adenosine(37) in tRNA = N(6)-L-threonylcarbamoyladenosine(37) in tRNA + AMP + H(+). Its function is as follows. Required for the formation of a threonylcarbamoyl group on adenosine at position 37 (t(6)A37) in tRNAs that read codons beginning with adenine. Is involved in the transfer of the threonylcarbamoyl moiety of threonylcarbamoyl-AMP (TC-AMP) to the N6 group of A37, together with TsaE and TsaB. TsaD likely plays a direct catalytic role in this reaction. The chain is tRNA N6-adenosine threonylcarbamoyltransferase from Pseudomonas putida (strain ATCC 47054 / DSM 6125 / CFBP 8728 / NCIMB 11950 / KT2440).